A 61-amino-acid polypeptide reads, in one-letter code: TERGFLDCTSPPVTGPCRAGFKRYNYNTRTKQCEPFKYGGCKGNGNRYKSEQDCLDACSGF.

The region spanning 8–58 is the BPTI/Kunitz inhibitor domain; sequence CTSPPVTGPCRAGFKRYNYNTRTKQCEPFKYGGCKGNGNRYKSEQDCLDAC. 3 cysteine pairs are disulfide-bonded: Cys8–Cys58, Cys17–Cys41, and Cys33–Cys54.

It localises to the secreted. In terms of biological role, inhibitor of trypsin and chymotrypsin. The polypeptide is Proteinase inhibitor (Tachypleus tridentatus (Japanese horseshoe crab)).